The primary structure comprises 69 residues: Putative membrane protein insertion efficiency factor (69 aa).

The protein belongs to the UPF0161 family.

The protein resides in the cell inner membrane. In terms of biological role, could be involved in insertion of integral membrane proteins into the membrane. The polypeptide is Putative membrane protein insertion efficiency factor (Magnetococcus marinus (strain ATCC BAA-1437 / JCM 17883 / MC-1)).